The primary structure comprises 334 residues: Dolichyl-phosphate beta-glucosyltransferase (334 aa).

Over 1-12 (MRALRFLIENRN) the chain is Lumenal. Residues 13 to 33 (TVFFTLLVALVLSLYLLVYLF) form a helical membrane-spanning segment. Residues 34–334 (SHTPRPPYPE…LGIYRDNKKC (301 aa)) are Cytoplasmic-facing.

The protein belongs to the glycosyltransferase 2 family.

The protein localises to the endoplasmic reticulum membrane. It carries out the reaction a di-trans,poly-cis-dolichyl phosphate + UDP-alpha-D-glucose = a di-trans,poly-cis-dolichyl beta-D-glucosyl phosphate + UDP. It functions in the pathway protein modification; protein glycosylation. In terms of biological role, endoplasmic reticulum membrane-bound UDP-glucose:dolichyl-phosphate glucosyltransferase involved in protein N-linked glycosylation. The chain is Dolichyl-phosphate beta-glucosyltransferase from Saccharomyces cerevisiae (strain ATCC 204508 / S288c) (Baker's yeast).